Consider the following 198-residue polypeptide: Recombination protein RecR (198 aa).

A C4-type zinc finger spans residues cysteine 58–cysteine 73. A Toprim domain is found at serine 81–proline 175.

Belongs to the RecR family.

Its function is as follows. May play a role in DNA repair. It seems to be involved in an RecBC-independent recombinational process of DNA repair. It may act with RecF and RecO. This Clostridium botulinum (strain Alaska E43 / Type E3) protein is Recombination protein RecR.